Consider the following 176-residue polypeptide: Nicotinamide-nucleotide adenylyltransferase (176 aa).

It belongs to the archaeal NMN adenylyltransferase family.

It is found in the cytoplasm. It carries out the reaction beta-nicotinamide D-ribonucleotide + ATP + H(+) = diphosphate + NAD(+). The protein operates within cofactor biosynthesis; NAD(+) biosynthesis; NAD(+) from nicotinamide D-ribonucleotide: step 1/1. The protein is Nicotinamide-nucleotide adenylyltransferase of Halorubrum lacusprofundi (strain ATCC 49239 / DSM 5036 / JCM 8891 / ACAM 34).